A 737-amino-acid chain; its full sequence is Translation initiation factor IF-2 (737 aa).

The span at 69 to 80 shows a compositional bias: basic and acidic residues; that stretch reads EKKEEKPIRKIM. Residues 69–130 form a disordered region; sequence EKKEEKPIRK…HKNKGKKKKG (62 aa). Basic residues-rich tracts occupy residues 95 to 108 and 121 to 130; these read NNKKAKFQQTKNKK and HKNKGKKKKG. The region spanning 237–404 is the tr-type G domain; that stretch reads ERPPVITIMG…TILITAEILE (168 aa). The segment at 246–253 is G1; it reads GHVDHGKT. A GTP-binding site is contributed by 246–253; that stretch reads GHVDHGKT. The interval 271–275 is G2; it reads GITQK. The tract at residues 292–295 is G3; sequence DTPG. GTP contacts are provided by residues 292-296 and 346-349; these read DTPGH and NKID. The interval 346–349 is G4; the sequence is NKID. The segment at 382-384 is G5; it reads SAK.

It belongs to the TRAFAC class translation factor GTPase superfamily. Classic translation factor GTPase family. IF-2 subfamily.

It is found in the cytoplasm. Functionally, one of the essential components for the initiation of protein synthesis. Protects formylmethionyl-tRNA from spontaneous hydrolysis and promotes its binding to the 30S ribosomal subunits. Also involved in the hydrolysis of GTP during the formation of the 70S ribosomal complex. This is Translation initiation factor IF-2 from Fusobacterium nucleatum subsp. nucleatum (strain ATCC 25586 / DSM 15643 / BCRC 10681 / CIP 101130 / JCM 8532 / KCTC 2640 / LMG 13131 / VPI 4355).